A 378-amino-acid polypeptide reads, in one-letter code: Mitogen-activated protein kinase mpkC (378 aa).

One can recognise a Protein kinase domain in the interval 20–300 (YVNPQPIGMG…AQDALRYPYL (281 aa)). Residues 26-34 (IGMGSFGLV) and Lys-49 contribute to the ATP site. The Proton acceptor role is filled by Asp-141. Thr-171 carries the phosphothreonine modification. A TXY motif is present at residues 171–173 (TGY). Residue Tyr-173 is modified to Phosphotyrosine.

Belongs to the protein kinase superfamily. Ser/Thr protein kinase family. MAP kinase subfamily. HOG1 sub-subfamily. In terms of assembly, interacts with sakA upon osmotic and cell wall stresses. Requires Mg(2+) as cofactor. In terms of processing, dually phosphorylated on Thr-171 and Tyr-173, which activates the enzyme.

The protein localises to the cytoplasm. It is found in the nucleus. The catalysed reaction is L-seryl-[protein] + ATP = O-phospho-L-seryl-[protein] + ADP + H(+). It carries out the reaction L-threonyl-[protein] + ATP = O-phospho-L-threonyl-[protein] + ADP + H(+). With respect to regulation, activated by tyrosine and threonine phosphorylation. In terms of biological role, mitogen-activated protein kinase; part of an osmotic and general signal pathways involved in regulation of the response to the cell wall damage, oxidative stress, drug resistance, and establishment of infection. Required for growth on media where sorbitol or mannitol is the sole carbon source. With sakA, plays a redundant or cooperative role in the conidial stress resistance. Also plays a supportive role in osmotic stress adaptation when sakA is deficient. Involved in paradoxical growth, the cell wall integrity (CWI) pathway and biofilm formation. Acts by modulating sakA activity upon exposure to several types o stresses and during cell wall biosynthesis. Also collaborates with sakA to allow ful virulence in a neutropenic murine model of invasive pulmonary aspergillosis. MpkC and sakA have both independent and collaborative functions during the transcriptional response to transient osmotic stress, and mpkC plays a major role in the modulation of the response to DNA metabolism while activating mitochondrial functions and cation transport. The sequence is that of Mitogen-activated protein kinase mpkC (mpkC) from Aspergillus fumigatus (strain ATCC MYA-4609 / CBS 101355 / FGSC A1100 / Af293) (Neosartorya fumigata).